The primary structure comprises 509 residues: Zinc finger protein CKR1 (509 aa).

Residues 1–61 (MEPYVLLDPR…GSEEPQTHPP (61 aa)) enclose the KRAB domain. Basic and acidic residues-rich tracts occupy residues 41–50 (EDAVGLKEDA) and 98–112 (PKRDGVKPSRVRDRP). The interval 41–114 (EDAVGLKEDA…PSRVRDRPFG (74 aa)) is disordered. C2H2-type zinc fingers lie at residues 113 to 135 (FGCPDCGKSFPWASHLERHRRVH), 141 to 163 (YSCPECGESYSQSSHLVQHRRTH), 169 to 191 (HKCQHCGKPFAGAAQLLAHSRGH), 197 to 219 (HRCGDCGKGFVWASHLERHRRVH), 225 to 247 (YECPECGEAFSQGSHLTKHRRSH), 279 to 303 (QRCAECGKAFRAAPPLRRHRRERSH), 303 to 325 (HRCGDCGKGFAWASHLQRHRRVH), 331 to 353 (FPCGLCGERFSQKAHLLQHGKTH), 359 to 383 (YKCGDCGKRFENAPPFLAHRRGHAA), 387 to 409 (FTCGDCGKGFAWASHLQRHRRVH), and 415 to 437 (YECPECGEAFSQGSHLTKHRRSH). The interval 428 to 479 (SHLTKHRRSHGPKAPLLPVQGRGEAGEPLRASPLSSGAEQRDGRRAQRGGVE) is disordered.

It belongs to the krueppel C2H2-type zinc-finger protein family.

Its subcellular location is the nucleus. This Gallus gallus (Chicken) protein is Zinc finger protein CKR1.